The chain runs to 96 residues: Co-chaperonin GroES (96 aa).

Belongs to the GroES chaperonin family. In terms of assembly, heptamer of 7 subunits arranged in a ring. Interacts with the chaperonin GroEL.

It is found in the cytoplasm. Together with the chaperonin GroEL, plays an essential role in assisting protein folding. The GroEL-GroES system forms a nano-cage that allows encapsulation of the non-native substrate proteins and provides a physical environment optimized to promote and accelerate protein folding. GroES binds to the apical surface of the GroEL ring, thereby capping the opening of the GroEL channel. The protein is Co-chaperonin GroES of Thioalkalivibrio sulfidiphilus (strain HL-EbGR7).